We begin with the raw amino-acid sequence, 113 residues long: Large ribosomal subunit protein uL22 (113 aa).

It belongs to the universal ribosomal protein uL22 family. As to quaternary structure, part of the 50S ribosomal subunit.

In terms of biological role, this protein binds specifically to 23S rRNA; its binding is stimulated by other ribosomal proteins, e.g. L4, L17, and L20. It is important during the early stages of 50S assembly. It makes multiple contacts with different domains of the 23S rRNA in the assembled 50S subunit and ribosome. Functionally, the globular domain of the protein is located near the polypeptide exit tunnel on the outside of the subunit, while an extended beta-hairpin is found that lines the wall of the exit tunnel in the center of the 70S ribosome. The protein is Large ribosomal subunit protein uL22 of Oceanobacillus iheyensis (strain DSM 14371 / CIP 107618 / JCM 11309 / KCTC 3954 / HTE831).